The sequence spans 244 residues: Small ribosomal subunit protein eS4 (244 aa).

Positions 43–108 (LPLLLIVRDI…NYRVLFDRKG (66 aa)) constitute an S4 RNA-binding domain.

The protein belongs to the eukaryotic ribosomal protein eS4 family.

This chain is Small ribosomal subunit protein eS4 (rps4e), found in Methanocaldococcus jannaschii (strain ATCC 43067 / DSM 2661 / JAL-1 / JCM 10045 / NBRC 100440) (Methanococcus jannaschii).